A 210-amino-acid polypeptide reads, in one-letter code: Menaquinone reductase, multiheme cytochrome c subunit (210 aa).

A helical membrane pass occupies residues 20 to 40; the sequence is GGAAPFFVGLVVALVFGWWAF. 18 residues coordinate heme: cysteine 67, cysteine 70, histidine 71, cysteine 88, cysteine 91, histidine 92, cysteine 140, cysteine 143, histidine 144, cysteine 152, cysteine 155, histidine 156, cysteine 186, cysteine 189, histidine 190, cysteine 205, cysteine 208, and histidine 209.

Belongs to the multiheme cytochrome c family. In terms of assembly, the Qrc complex is composed of four subunits: QrcA, QrcB, QrcC and QrcD. Can form a supercomplex with the [NiFe] hydrogenase HynA1 and the tetraheme Type I cytochrome c3 TpIc(3), its physiological electron donors. Heme c serves as cofactor.

It localises to the cell inner membrane. In terms of biological role, component of the respiratory Qrc complex, that catalyzes the reduction of the menaquinone pool using electrons transferred from the reduced periplasmic cytochrome c3, and which is probably involved in sulfate respiration. Is likely essential for growth on H(2) or formate since the periplasmic hydrogenases and/or formate dehydrogenases act as primary electron donors for the Qrc complex. The chain is Menaquinone reductase, multiheme cytochrome c subunit from Nitratidesulfovibrio vulgaris (strain ATCC 29579 / DSM 644 / CCUG 34227 / NCIMB 8303 / VKM B-1760 / Hildenborough) (Desulfovibrio vulgaris).